A 773-amino-acid chain; its full sequence is DNA polymerase (773 aa).

The tract at residues 1 to 131 (MILDADYITE…IDRGLIPMEG (131 aa)) is N-terminal domain. Positions 133-385 (EELRMLAFDI…ELARRTESYA (253 aa)) are exonuclease domain. Mg(2+) is bound by residues aspartate 141, glutamate 143, and aspartate 315. The tract at residues 390 to 773 (KEPEKGLWEN…GLGAWLKPKT (384 aa)) is polymerase domain. Disulfide bonds link cysteine 428–cysteine 442 and cysteine 506–cysteine 509.

Belongs to the DNA polymerase type-B family. Requires Mg(2+) as cofactor.

The catalysed reaction is DNA(n) + a 2'-deoxyribonucleoside 5'-triphosphate = DNA(n+1) + diphosphate. DNA polymerase activity strongly inhibited by uracil-containing oligonucleotides. Its function is as follows. Thermostable DNA polymerase. In addition to polymerase activity, this DNA polymerase exhibits 3' to 5' exonuclease activity. This Desulfurococcus sp. (strain Tok) protein is DNA polymerase (pol).